Consider the following 216-residue polypeptide: Adenylate kinase (216 aa).

10 to 15 (GAGKGT) provides a ligand contact to ATP. Residues 30 to 59 (STGDIFRKNISNKTPLGMEAKSYMDKGQLV) are NMP. Residues T31, R36, 57-59 (QLV), 85-88 (GFPR), and Q92 each bind AMP. Residues 126-163 (GRRVCGECGASYHIKFITPKTEGVCDLCGGKLVQRKDD) form an LID region. R127 contributes to the ATP binding site. The Zn(2+) site is built by C130 and C133. 136 to 137 (SY) contributes to the ATP binding site. Zn(2+)-binding residues include C150 and C153. Positions 160 and 171 each coordinate AMP. ATP is bound at residue K199.

It belongs to the adenylate kinase family. Monomer.

Its subcellular location is the cytoplasm. It catalyses the reaction AMP + ATP = 2 ADP. It functions in the pathway purine metabolism; AMP biosynthesis via salvage pathway; AMP from ADP: step 1/1. In terms of biological role, catalyzes the reversible transfer of the terminal phosphate group between ATP and AMP. Plays an important role in cellular energy homeostasis and in adenine nucleotide metabolism. This Clostridium tetani (strain Massachusetts / E88) protein is Adenylate kinase.